Here is a 306-residue protein sequence, read N- to C-terminus: Acetyl-coenzyme A carboxylase carboxyl transferase subunit beta (306 aa).

Residues 25–294 (LWIKDPTSGE…VVNPSNTSST (270 aa)) form the CoA carboxyltransferase N-terminal domain. Positions 287–296 (NPSNTSSTNS) are enriched in low complexity. The segment at 287–306 (NPSNTSSTNSQASLSKAEAA) is disordered.

The protein belongs to the AccD/PCCB family. As to quaternary structure, acetyl-CoA carboxylase is a heterohexamer composed of biotin carboxyl carrier protein (AccB), biotin carboxylase (AccC) and two subunits each of ACCase subunit alpha (AccA) and ACCase subunit beta (AccD).

The protein resides in the cytoplasm. It carries out the reaction N(6)-carboxybiotinyl-L-lysyl-[protein] + acetyl-CoA = N(6)-biotinyl-L-lysyl-[protein] + malonyl-CoA. Its pathway is lipid metabolism; malonyl-CoA biosynthesis; malonyl-CoA from acetyl-CoA: step 1/1. Component of the acetyl coenzyme A carboxylase (ACC) complex. Biotin carboxylase (BC) catalyzes the carboxylation of biotin on its carrier protein (BCCP) and then the CO(2) group is transferred by the transcarboxylase to acetyl-CoA to form malonyl-CoA. The sequence is that of Acetyl-coenzyme A carboxylase carboxyl transferase subunit beta from Bartonella henselae (strain ATCC 49882 / DSM 28221 / CCUG 30454 / Houston 1) (Rochalimaea henselae).